Reading from the N-terminus, the 79-residue chain is Small ribosomal subunit protein bS18 (79 aa).

The protein belongs to the bacterial ribosomal protein bS18 family. As to quaternary structure, part of the 30S ribosomal subunit. Forms a tight heterodimer with protein bS6.

Functionally, binds as a heterodimer with protein bS6 to the central domain of the 16S rRNA, where it helps stabilize the platform of the 30S subunit. This chain is Small ribosomal subunit protein bS18, found in Bacillus pumilus (strain SAFR-032).